The primary structure comprises 150 residues: Cytosine deaminase (150 aa).

In terms of domain architecture, CMP/dCMP-type deaminase spans 3-121 (FDDKKGLQVA…KLLIENGVEV (119 aa)). N44 contributes to the substrate binding site. H55 contributes to the Zn(2+) binding site. E57 (proton donor) is an active-site residue. Residues C84 and C87 each coordinate Zn(2+). A substrate-binding site is contributed by D147.

It belongs to the cytidine and deoxycytidylate deaminase family. In terms of assembly, homodimer. Requires Zn(2+) as cofactor.

Its subcellular location is the cytoplasm. It localises to the nucleus. It carries out the reaction cytosine + H2O + H(+) = uracil + NH4(+). It participates in pyrimidine metabolism; UMP biosynthesis via salvage pathway; uracil from cytosine: step 1/1. Functionally, catalyzes the hydrolytic deamination of cytosine to uracil or 5-methylcytosine to thymine. Is involved in the pyrimidine salvage pathway, which allows the cell to utilize cytosine for pyrimidine nucleotide synthesis. The protein is Cytosine deaminase of Candida albicans (strain SC5314 / ATCC MYA-2876) (Yeast).